A 220-amino-acid polypeptide reads, in one-letter code: Deoxyribose-phosphate aldolase (220 aa).

Asp-89 acts as the Proton donor/acceptor in catalysis. The Schiff-base intermediate with acetaldehyde role is filled by Lys-151. Lys-180 functions as the Proton donor/acceptor in the catalytic mechanism.

It belongs to the DeoC/FbaB aldolase family. DeoC type 1 subfamily.

It localises to the cytoplasm. The enzyme catalyses 2-deoxy-D-ribose 5-phosphate = D-glyceraldehyde 3-phosphate + acetaldehyde. The protein operates within carbohydrate degradation; 2-deoxy-D-ribose 1-phosphate degradation; D-glyceraldehyde 3-phosphate and acetaldehyde from 2-deoxy-alpha-D-ribose 1-phosphate: step 2/2. Functionally, catalyzes a reversible aldol reaction between acetaldehyde and D-glyceraldehyde 3-phosphate to generate 2-deoxy-D-ribose 5-phosphate. The protein is Deoxyribose-phosphate aldolase of Staphylococcus saprophyticus subsp. saprophyticus (strain ATCC 15305 / DSM 20229 / NCIMB 8711 / NCTC 7292 / S-41).